The primary structure comprises 77 residues: Translation initiation factor IF-1, chloroplastic (77 aa).

The S1-like domain maps to 1 to 71 (MKEQKWIHEG…TRGRIIYRLR (71 aa)).

It belongs to the IF-1 family. As to quaternary structure, component of the 30S ribosomal translation pre-initiation complex which assembles on the 30S ribosome in the order IF-2 and IF-3, IF-1 and N-formylmethionyl-tRNA(fMet); mRNA recruitment can occur at any time during PIC assembly.

Its subcellular location is the plastid. The protein resides in the chloroplast. Its function is as follows. One of the essential components for the initiation of protein synthesis. Stabilizes the binding of IF-2 and IF-3 on the 30S subunit to which N-formylmethionyl-tRNA(fMet) subsequently binds. Helps modulate mRNA selection, yielding the 30S pre-initiation complex (PIC). Upon addition of the 50S ribosomal subunit IF-1, IF-2 and IF-3 are released leaving the mature 70S translation initiation complex. This chain is Translation initiation factor IF-1, chloroplastic, found in Spinacia oleracea (Spinach).